Consider the following 316-residue polypeptide: B3 domain-containing protein Os04g0581400 (316 aa).

The interval 1–100 (MEFATTSSRF…GSGGGGGGED (100 aa)) is disordered. Positions 13–36 (EEEEEEEGEQEMEQEQDEEEEEAE) are enriched in acidic residues. Low complexity predominate over residues 46–77 (TSAAAAATASSSSPTSVSPSATASAAASTSAS). The span at 88–98 (GASGSGGGGGG) shows a compositional bias: gly residues. Residues 110–215 (FDKVVTPSDV…RLFIDWKRRA (106 aa)) constitute a DNA-binding region (TF-B3). A disordered region spans residues 239–290 (GGAGASSCRPRRPPRSTSITAFARASTSATSTPLCRRGSSSSSAPQGRGFIS). Positions 253–270 (RSTSITAFARASTSATST) are enriched in low complexity.

The protein localises to the nucleus. The sequence is that of B3 domain-containing protein Os04g0581400 from Oryza sativa subsp. japonica (Rice).